The primary structure comprises 1470 residues: MNNNKEVPQNSVAVSSSSSAPITVISPQQDANNFIKKRRTALRNRIYAIVRHKQKQHQIFLDKKNQQQQQRVDDATQRALLEKQDQQCIAATRMIEEELLKSSRSFEEYFDLRTFDARVRTILQQLGTMLSQRRAAAAAMNNGEAQCITSTRAVHTSISVSNSFQCGRSLVPINCTTATAGAFSIGPDMQTHHSTGANHQMVEVNRPNMNQITCGISSPLITGFNGNCVPVSANIPMTSQDLFNATHFSTLPQPFLQPPPDQSHMHRYSMSNVASFGQSNPYPCGVVMSSGSMAVAQNSIPWNNPNPMQGLDPTVTSYHSNLQPMQQTPLPKRQLHHPLWNTNFQSAPNNRDNLPQVSQQLSNHGSRQHRGQHSQNLYPGQLQNQDRLLPNLTQQAMALAAPVMHVPSKQVNEDCGQTSSNTVLRWIPFMFHARHCKAKKDKCASKFCFQARKIVKHIDCCKVPNCKYRYCLGTRMWLDHFKQCKSISCRTCVAVREYMEKNKYTIVPLRRAKCSSASSKCQPKKSSKSRQAYKKGGAEAPSVDADLQRSIKRPKLHRPSQNITPETKSISVTGCGVVCKPHSLMNMQEKDGLQSLKVEAMPMDIDVPGASEIPVTRELVKHVAEDTPKGNNCGGFAMVEKTSCLLAQGKSKCMNEMSAPKEENVKQSVEVVDASKMEISSLVELFTPEQVKEHIRSLRQWVGQSKTKAEKNKAMGCSMSVNSCQLCAVEWLVFEPVPIYCSPCGIRIKKNALHYSIAVGESRHYVCAPCYNEAREKLVFLDGTSIPKTRLQKKKNDEQVPEGWVQCDKCEAWQHIICALFNSRRNHGESTKYTCPSCYIQEVEQRERRPLPLSAVPGATSLPVTSLSKHLEERLFKKLKEERQERARLQGKTYEEVPGAESLTVRVVASVDKVLEVKERFLELFREENYPSEFPYKSKAIFLFQKIENVEVCLFGMFVQEFGTDSGPPNERRVYLSYLDSVKYFRPTFRTVSGEALRTFVYHEILIGYLDYCKKRGFTSCYIWACPPLKGDDYILYCHPEIQKTPKTDKLREWYLAMLRKASKEDVVVECTNLYNHFFVQSGECRANVTAARLPYFDGDYWPSAAEDLLRQMNQEDDGETKLHRKGLTKKVISKRALKAVGQLDLSLNASKDRLMMQKLGETICPMKEDFIMVHLQHCCKHCTTLMVSGNRWVCNHCKNFQICDKCYEVEQNRINIERHPINQKEKHALFPVAIKDVPTKIEDKDNNLESEFFHNRQAFLNLCQGNNYQYETLRRAKHSSMMILYHLHNPTAPAFATVCTICQQEVENSQGWHCEVCPGYDVCSACYSKDSINHSHKLTSRSSSTDSTVVQQNGQASQSYQVKLEKLKKLLVHAATCRSTQCQYQGCRKSKMLFRHCIDCTTGDCPICKGLWSLLKLHARNCRDSKCTVPKCSGLRAISRRKQQQADKRRRAAVMEMMRERAAEATRTG.

Residues 1 to 10 (MNNNKEVPQN) show a composition bias toward polar residues. Disordered stretches follow at residues 1 to 20 (MNNN…SSSA) and 342 to 376 (TNFQ…HSQN). Positions 11-20 (SVAVSSSSSA) are enriched in low complexity. Positions 342–365 (TNFQSAPNNRDNLPQVSQQLSNHG) are enriched in polar residues. The segment at 416 to 495 (GQTSSNTVLR…SISCRTCVAV (80 aa)) adopts a TAZ-type 1 zinc-finger fold. Positions 518–566 (SSKCQPKKSSKSRQAYKKGGAEAPSVDADLQRSIKRPKLHRPSQNITPE) are disordered. Positions 522–533 (QPKKSSKSRQAY) are enriched in basic residues. The PHD-type zinc-finger motif lies at 764 to 841 (HYVCAPCYNE…KYTCPSCYIQ (78 aa)). The CBP/p300-type HAT domain occupies 856–1293 (VPGATSLPVT…ILYHLHNPTA (438 aa)). Residues 979-981 (LDS), 998-999 (RT), and Trp-1054 each bind acetyl-CoA. 2 consecutive ZZ-type zinc fingers follow at residues 1175-1238 (HLQH…IKDV) and 1295-1347 (AFAT…SSTD). Cys-1180, Cys-1183, Cys-1195, Cys-1198, Cys-1204, Cys-1207, His-1220, His-1228, Cys-1300, Cys-1303, Cys-1315, Cys-1318, Cys-1324, Cys-1327, His-1335, and His-1337 together coordinate Zn(2+). Residues 1358–1436 (SQSYQVKLEK…KCTVPKCSGL (79 aa)) form a TAZ-type 2 zinc finger.

In terms of tissue distribution, rosette leaves, stems and flowers.

Its subcellular location is the nucleus. The catalysed reaction is L-lysyl-[protein] + acetyl-CoA = N(6)-acetyl-L-lysyl-[protein] + CoA + H(+). Its function is as follows. Acetyltransferase enzyme. Acetylates histones, giving a specific tag for transcriptional activation. In Arabidopsis thaliana (Mouse-ear cress), this protein is Histone acetyltransferase HAC4 (HAC4).